We begin with the raw amino-acid sequence, 234 residues long: DNA repair protein RecO (234 aa).

The protein belongs to the RecO family.

In terms of biological role, involved in DNA repair and RecF pathway recombination. The protein is DNA repair protein RecO of Hamiltonella defensa subsp. Acyrthosiphon pisum (strain 5AT).